The following is a 259-amino-acid chain: Adenosylcobinamide-GDP ribazoletransferase (259 aa).

Transmembrane regions (helical) follow at residues 27–47 (ITFLPLVVTVGALIGDSILYI), 51–71 (FSHLIASFLSISSIIIYNGLN), 100–120 (VGAGGIFAVIFVYGIAVLSLA), 124–144 (LYIGLVGILIGQVVSGSSMMI), 175–195 (FLAIPIIVSFIFSPLYVVIVA), and 219–239 (VIGFLGEFSRSLFIFMLIIIA).

The protein belongs to the CobS family. Requires Mg(2+) as cofactor.

Its subcellular location is the cell membrane. The catalysed reaction is alpha-ribazole + adenosylcob(III)inamide-GDP = adenosylcob(III)alamin + GMP + H(+). It carries out the reaction alpha-ribazole 5'-phosphate + adenosylcob(III)inamide-GDP = adenosylcob(III)alamin 5'-phosphate + GMP + H(+). It functions in the pathway cofactor biosynthesis; adenosylcobalamin biosynthesis; adenosylcobalamin from cob(II)yrinate a,c-diamide: step 7/7. In terms of biological role, joins adenosylcobinamide-GDP and alpha-ribazole to generate adenosylcobalamin (Ado-cobalamin). Also synthesizes adenosylcobalamin 5'-phosphate from adenosylcobinamide-GDP and alpha-ribazole 5'-phosphate. This Thermoplasma volcanium (strain ATCC 51530 / DSM 4299 / JCM 9571 / NBRC 15438 / GSS1) protein is Adenosylcobinamide-GDP ribazoletransferase.